The chain runs to 381 residues: Heme A synthase (381 aa).

The tract at residues Met-1–Lys-28 is disordered. 8 helical membrane-spanning segments follow: residues Ile-36–Leu-56, Val-125–Thr-145, Leu-151–Ser-171, Leu-187–Leu-207, Ser-230–Ile-250, Leu-287–Trp-307, Phe-320–Val-340, and Ala-344–Leu-364. His-292 contributes to the heme binding site. Heme is bound at residue His-352.

It belongs to the COX15/CtaA family. Type 2 subfamily. As to quaternary structure, interacts with CtaB. The cofactor is heme b.

It localises to the cell membrane. It catalyses the reaction Fe(II)-heme o + 2 A + H2O = Fe(II)-heme a + 2 AH2. It functions in the pathway porphyrin-containing compound metabolism; heme A biosynthesis; heme A from heme O: step 1/1. Catalyzes the conversion of heme O to heme A by two successive hydroxylations of the methyl group at C8. The first hydroxylation forms heme I, the second hydroxylation results in an unstable dihydroxymethyl group, which spontaneously dehydrates, resulting in the formyl group of heme A. The polypeptide is Heme A synthase (Ruegeria sp. (strain TM1040) (Silicibacter sp.)).